The following is an 801-amino-acid chain: Elongation factor G, mitochondrial (801 aa).

Residues 1–24 (MRCPSLARLPHRAISGLTRLPVRL) constitute a mitochondrion transit peptide. Residues 99 to 386 (SRIRNIGIAA…GVIDYLPNPS (288 aa)) form the tr-type G domain. Residues 108–115 (AHIDSGKT), 184–188 (DTPGH), and 238–241 (NKMD) each bind GTP.

It belongs to the TRAFAC class translation factor GTPase superfamily. Classic translation factor GTPase family. EF-G/EF-2 subfamily.

It is found in the mitochondrion. Its pathway is protein biosynthesis; polypeptide chain elongation. Mitochondrial GTPase that catalyzes the GTP-dependent ribosomal translocation step during translation elongation. During this step, the ribosome changes from the pre-translocational (PRE) to the post-translocational (POST) state as the newly formed A-site-bound peptidyl-tRNA and P-site-bound deacylated tRNA move to the P and E sites, respectively. Catalyzes the coordinated movement of the two tRNA molecules, the mRNA and conformational changes in the ribosome. The polypeptide is Elongation factor G, mitochondrial (mef1) (Aspergillus clavatus (strain ATCC 1007 / CBS 513.65 / DSM 816 / NCTC 3887 / NRRL 1 / QM 1276 / 107)).